The following is a 1612-amino-acid chain: MAYTQQATNAALASTLRGNNPLVNDLANRRLYESAVEQCNAHDRRPKVNFLRSISEEQTLIATKAYPEFQITFYNTQNAVHSLAGGLRSLELEYLMMQIPYGSTTYDIGGNFAAHMFKGRDYVHCCMPNMDLRDVMRHNAQKDSIELYLSKLAQKKKVIPPYQKPCFDKYTDDPQSVVCSKPFQHCEGVSHCTDKVYAVALHSLYDIPADEFGAALLRRNVHVCYAAFHFSENLLLEDSYVSLDDIGAFFSREGDMLNFSFVAESTLNYTHSYSNVLKYVCKTYFPASSREVYMKEFLVTRVNTWFCKFSRLDTFVLYRGVYHRGVDKEQFYSAMEDAWHYKKTLAMMNSERILLEDSSSVNYWFPKMKDMVIVPLFDVSLQNEGKRLARKEVMVSKDFVYTVLNHIRTYQSKALTYANVLSFVESIRSRVIINGVTARSEWDVDKALLQSLSMTFFLQTKLAMLKDDLVVQKFQVHSKSLTEYVWDEITAAFHNCFPTIKERLINKKLITVSEKALEIKVPDLYVTFHDRLVKEYKSSVEMPVLDVKKSLEEAEVMYNALSEISILKDSDKFDVDVFSRMCNTLGVDPLVAAKVMVAVVSNESGLTLTFERPTEANVALALQPTITSKEEGSLKIVSSDVGESSIKEVVRKSEISMLGLTGNTVSDEFQRSTEIESLQQFHMVSTETIIRKQMHAMVYTGPLKVQQCKNYLDSLVASLSAAVSNLKKIIKDTAAIDLETKEKFGVYDVCLKKWLVKPLSKGHAWGVVMDSDYKCFVALLTYDGENIVCGETWRRVAVSSESLVYSDMGKIRAIRSVLKDGEPHISSAKVTLVDGVPGCGKTKEILSRVNFDEDLVLVPGKQAAEMIRRRANSSGLIVATKENVRTVDSFLMNYGRGPCQYKRLFLDEGLMLHPGCVNFLVGMSLCSEAFVYGDTQQIPYINRVATFPYPKHLSQLEVDAVETRRTTLRCPADITFFLNQKYEGQVMCTSSVTRSVSHEVIQGAAVMNPVSKPLKGKVITFTQSDKSLLLSRGYEDVHTVHEVQGETFEDVSLVRLTPTPVGIISKQSPHLLVSLSRHTRSIKYYTVVLDAVVSVLRDLECVSSYLLDMYKVDVSTQXQLQIESVYKGVNLFVAAPKTGDVSDMQYYYDKCLPGNSTILNEYDAVTMQIRENSLNVKDCVLDMSKSVPLPRESETTLKPVIRTAAEKPRKPGLLENLVAMIKRNFNSPELVGVVDIEDTASLVVDKFFDAYLIKEKKKPKNIPLLSRASLERWIEKQEKSTIGQLADFDFIDLPAVDQYRHMIKQQPKQRLDLSIQTEYPALQTIVYHSKKINALFGPVFSELTRQLLETIDSSRFMFYTRKTPTQIEEFFSDLDSNVPMDILELDISKYDKSQNEFHCAVEYEIWKRLGLDDFLAEVWKHGHRKTTLKDYTAGIKTCLWYQRKSGDVTTFIGNTIIIAACLSSMLPMERLIKGAFCGDDSILYFPKGTDFPDIQQGANLLWNFEAKLFRKRYGYFCGRYIIHHDRGCIVYYDPLKLISKLGAKHIKNREHLEEFRTSLCDVAGSLNNCAYYTHLNDAVGEVIKTAPLGSFVYRALVKYLCDKRLFQTLFLE.

The segment at 52-466 is methyltransferase; the sequence is RSISEEQTLI…FLQTKLAMLK (415 aa). The 209-residue stretch at 72-280 folds into the Alphavirus-like MT domain; it reads TFYNTQNAVH…HSYSNVLKYV (209 aa). Positions 803–964 constitute a (+)RNA virus helicase ATP-binding domain; that stretch reads LVYSDMGKIR…QLEVDAVETR (162 aa). The segment at 831 to 1086 is helicase; sequence TLVDGVPGCG…RHTRSIKYYT (256 aa). Position 835 to 842 (835 to 842) interacts with ATP; that stretch reads GVPGCGKT. A (+)RNA virus helicase C-terminal domain is found at 965–1117; sequence RTTLRCPADI…DMYKVDVSTQ (153 aa). The 114-residue stretch at 1380–1493 folds into the RdRp catalytic domain; that stretch reads MDILELDISK…YFPKGTDFPD (114 aa).

The protein belongs to the ssRNA positive-strand viruses RNA-directed RNA polymerase family. As to quaternary structure, heterodimer of a large and a small subunit.

It carries out the reaction RNA(n) + a ribonucleoside 5'-triphosphate = RNA(n+1) + diphosphate. The enzyme catalyses ATP + H2O = ADP + phosphate + H(+). Is an RNA-dependent RNA polymerase active in viral RNA replication. Functionally, is a methyltransferase active in RNA capping and an RNA helicase. Methyltransferase displays a cytoplasmic capping enzyme activity. This function is necessary since all viral RNAs are synthesized in the cytoplasm, and host capping enzymes are restricted to the nucleus. Helicase region probably exhibits NTPase and RNA unwinding activities (Potential). It also acts as a suppressor of RNA-mediated gene silencing, also known as post-transcriptional gene silencing (PTGS), a mechanism of plant viral defense that limits the accumulation of viral RNAs. May mediate silencing suppression through either inhibition of HEN1-mediated siRNA or siRNA demethylation. The polypeptide is Replicase large subunit (Pepper mild mottle virus (strain Spain) (PMMV-S)).